A 452-amino-acid chain; its full sequence is Solute carrier family 52, riboflavin transporter, member 3-B (452 aa).

The next 5 membrane-spanning stretches (helical) occupy residues 11–31, 38–58, 73–93, 111–131, and 138–158; these read LFGI…PLIV, WLLP…PLFI, PVIY…AFLW, LSFL…PFMM, and LTTY…VALV. 4 N-linked (GlcNAc...) asparagine glycosylation sites follow: N168, N174, N179, and N193. 6 consecutive transmembrane segments (helical) span residues 199 to 219, 285 to 305, 321 to 341, 344 to 364, 381 to 401, and 412 to 432; these read FFLF…LLNL, VFIF…LPSV, AATL…FVPI, LVLM…IMAM, ALIV…KVII, and ALVW…LSMF.

This sequence belongs to the riboflavin transporter family.

Its subcellular location is the cell membrane. It catalyses the reaction riboflavin(in) = riboflavin(out). In terms of biological role, plasma membrane transporter mediating the uptake by cells of the water soluble vitamin B2/riboflavin that plays a key role in biochemical oxidation-reduction reactions of the carbohydrate, lipid, and amino acid metabolism. In Danio rerio (Zebrafish), this protein is Solute carrier family 52, riboflavin transporter, member 3-B (slc52a3b).